Reading from the N-terminus, the 177-residue chain is Large ribosomal subunit protein uL6 (177 aa).

This sequence belongs to the universal ribosomal protein uL6 family. As to quaternary structure, part of the 50S ribosomal subunit.

Functionally, this protein binds to the 23S rRNA, and is important in its secondary structure. It is located near the subunit interface in the base of the L7/L12 stalk, and near the tRNA binding site of the peptidyltransferase center. The sequence is that of Large ribosomal subunit protein uL6 from Methanococcoides burtonii (strain DSM 6242 / NBRC 107633 / OCM 468 / ACE-M).